The following is a 151-amino-acid chain: Deoxyuridine 5'-triphosphate nucleotidohydrolase (151 aa).

Residues 70–72, asparagine 83, 87–89, and methionine 97 each bind substrate; these read RSG and LID.

Belongs to the dUTPase family. Mg(2+) serves as cofactor.

The catalysed reaction is dUTP + H2O = dUMP + diphosphate + H(+). The protein operates within pyrimidine metabolism; dUMP biosynthesis; dUMP from dCTP (dUTP route): step 2/2. Functionally, this enzyme is involved in nucleotide metabolism: it produces dUMP, the immediate precursor of thymidine nucleotides and it decreases the intracellular concentration of dUTP so that uracil cannot be incorporated into DNA. The protein is Deoxyuridine 5'-triphosphate nucleotidohydrolase of Pseudomonas putida (strain W619).